A 94-amino-acid chain; its full sequence is Cystatin-A3 (94 aa).

Residues 46–50 (QLVNG) carry the Secondary area of contact motif.

It belongs to the cystatin family.

Its subcellular location is the cytoplasm. Its function is as follows. Intracellular thiol proteinase inhibitor. This is Cystatin-A3 (cpiC) from Dictyostelium discoideum (Social amoeba).